The chain runs to 704 residues: Elongation factor G (704 aa).

The region spanning 10-290 (NKVRNIGIMA…AVIDYLPSPL (281 aa)) is the tr-type G domain. Residues 19-26 (AHIDAGKT), 83-87 (DTPGH), and 137-140 (NKMD) contribute to the GTP site.

Belongs to the TRAFAC class translation factor GTPase superfamily. Classic translation factor GTPase family. EF-G/EF-2 subfamily.

It localises to the cytoplasm. In terms of biological role, catalyzes the GTP-dependent ribosomal translocation step during translation elongation. During this step, the ribosome changes from the pre-translocational (PRE) to the post-translocational (POST) state as the newly formed A-site-bound peptidyl-tRNA and P-site-bound deacylated tRNA move to the P and E sites, respectively. Catalyzes the coordinated movement of the two tRNA molecules, the mRNA and conformational changes in the ribosome. This chain is Elongation factor G, found in Clavibacter michiganensis subsp. michiganensis (strain NCPPB 382).